A 391-amino-acid chain; its full sequence is Phosphoglycerate kinase (391 aa).

Residues 21–23 (DLN), Arg36, 59–62 (HLGR), Arg113, and Arg146 contribute to the substrate site. ATP contacts are provided by residues Lys197, Glu319, and 345–348 (GGDT).

This sequence belongs to the phosphoglycerate kinase family. As to quaternary structure, monomer.

Its subcellular location is the cytoplasm. It catalyses the reaction (2R)-3-phosphoglycerate + ATP = (2R)-3-phospho-glyceroyl phosphate + ADP. Its pathway is carbohydrate degradation; glycolysis; pyruvate from D-glyceraldehyde 3-phosphate: step 2/5. The polypeptide is Phosphoglycerate kinase (Shewanella piezotolerans (strain WP3 / JCM 13877)).